A 175-amino-acid chain; its full sequence is Phytochrome-interacting ankyrin-repeat protein 1 (175 aa).

3 ANK repeats span residues 30–59 (RGWTQLHIKAREGDLKAVKELLDQGADVNA), 67–96 (KGMTPLHLAAKGGHIEVMDLLLERGANMEA), and 102–131 (CGWTPLHAAAKERKREAVKFLVGNGAFLPD).

Interacts with phytochrome A (PHYA), both in Pr and Pfr forms.

It localises to the cytoplasm. The protein resides in the nucleus. Its subcellular location is the mitochondrion. The chain is Phytochrome-interacting ankyrin-repeat protein 1 from Arabidopsis thaliana (Mouse-ear cress).